A 62-amino-acid chain; its full sequence is Large ribosomal subunit protein bL28 (62 aa).

The interval 1–28 (MARKCVITGRKSRSGNSRSHAMNASKRT) is disordered. Residues 14 to 26 (SGNSRSHAMNASK) are compositionally biased toward polar residues.

Belongs to the bacterial ribosomal protein bL28 family.

The sequence is that of Large ribosomal subunit protein bL28 from Bacillus licheniformis (strain ATCC 14580 / DSM 13 / JCM 2505 / CCUG 7422 / NBRC 12200 / NCIMB 9375 / NCTC 10341 / NRRL NRS-1264 / Gibson 46).